The following is a 268-amino-acid chain: Phosphatidylglycerol--prolipoprotein diacylglyceryl transferase (268 aa).

4 helical membrane passes run 14–34 (LGPI…FAGW), 57–77 (LTFY…IIFY), 90–110 (FFLW…LIAF), and 117–137 (IGAN…IGLG). A 1,2-diacyl-sn-glycero-3-phospho-(1'-sn-glycerol) is bound at residue arginine 140. A run of 3 helical transmembrane segments spans residues 174 to 194 (QLFE…LVTI), 200 to 220 (YLVL…CEFF), and 238 to 258 (GQIL…AVFI).

This sequence belongs to the Lgt family.

The protein resides in the cell inner membrane. It carries out the reaction L-cysteinyl-[prolipoprotein] + a 1,2-diacyl-sn-glycero-3-phospho-(1'-sn-glycerol) = an S-1,2-diacyl-sn-glyceryl-L-cysteinyl-[prolipoprotein] + sn-glycerol 1-phosphate + H(+). The protein operates within protein modification; lipoprotein biosynthesis (diacylglyceryl transfer). Functionally, catalyzes the transfer of the diacylglyceryl group from phosphatidylglycerol to the sulfhydryl group of the N-terminal cysteine of a prolipoprotein, the first step in the formation of mature lipoproteins. This chain is Phosphatidylglycerol--prolipoprotein diacylglyceryl transferase, found in Francisella tularensis subsp. holarctica (strain FTNF002-00 / FTA).